Consider the following 558-residue polypeptide: MARVEL domain-containing protein 2 (558 aa).

Basic and acidic residues predominate over residues 1-16; the sequence is MSNDGRSRNRDRRYDE. 2 disordered regions span residues 1-58 and 115-145; these read MSND…PPFG and CSPP…GTFS. Over 1 to 194 the chain is Cytoplasmic; it reads MSNDGRSRNR…YMKSWAGLLR (194 aa). Residues 45-58 are compositionally biased toward pro residues; sequence PLPPPPLPLQPPFG. A phosphoserine mark is found at Ser116, Ser120, and Ser161. Position 166 is a phosphothreonine (Thr166). Residues 188-367 form the MARVEL domain; the sequence is SWAGLLRILG…SALVCLKLWR (180 aa). A helical membrane pass occupies residues 195 to 215; that stretch reads ILGVVELLLGAGVFACVTAYI. Over 216 to 223 the chain is Extracellular; the sequence is HKDSEWYN. A helical transmembrane segment spans residues 224 to 244; it reads LFGYSQPYGMGGVGGLGSMYG. At 245 to 254 the chain is on the cytoplasmic side; it reads GYYYTGPKTP. Residues 255-275 form a helical membrane-spanning segment; it reads FVLVVAGLAWITTIIILVLGM. Residues 276–291 lie on the Extracellular side of the membrane; that stretch reads SMYYRTILLDSNWWPL. The chain crosses the membrane as a helical span at residues 292–312; sequence TEFGINVALFILYMAAAIVYV. Residues 313–319 lie on the Cytoplasmic side of the membrane; sequence NDTNRGG. Residues 320–337 form a helical membrane-spanning segment; sequence LCYYPLFNTPVNAVFCRV. The Extracellular portion of the chain corresponds to 338-341; that stretch reads EGGQ. A helical transmembrane segment spans residues 342 to 362; the sequence is IAAMIFLFVTMIVYLISALVC. The Cytoplasmic segment spans residues 363-558; it reads LKLWRHEAAR…VMNWDVQGYS (196 aa). Residue Ser387 is modified to Phosphoserine. Lys412 is covalently cross-linked (Glycyl lysine isopeptide (Lys-Gly) (interchain with G-Cter in ubiquitin)). A coiled-coil region spans residues 439–548; that stretch reads MPDYVAKYPV…IKQRIQEYDK (110 aa). In terms of domain architecture, OCEL spans 440–551; it reads PDYVAKYPVI…RIQEYDKVMN (112 aa).

Belongs to the ELL/occludin family. Interacts with TJP1. Interacts with the ubiquitin ligase ITCH. Interacts (via C-terminal cytoplasmic domain) with LSR (via the cytoplasmic domain), ILDR1 and ILDR2; the interaction is required to recruit MARVELD2 to tricellular contacts. In terms of processing, ubiquitinated by ITCH; but this ubiquitination does not lead to proteasomal degradation. Polyubiquitinated at Lys-412 via 'Lys-63'-linked ubiquitin chains; deubiquitinated by USP53. Phosphorylated.

Its subcellular location is the cell membrane. The protein localises to the cell junction. It is found in the tight junction. Plays a role in the formation of tricellular tight junctions and of epithelial barriers. Required for normal hearing via its role in the separation of the endolymphatic and perilymphatic spaces of the organ of Corti in the inner ear, and for normal survival of hair cells in the organ of Corti. This Homo sapiens (Human) protein is MARVEL domain-containing protein 2.